The following is a 945-amino-acid chain: MSNKKADSKPQAKYPVNLLDTPFPMRGDLPKREPQWVEDWEARGVYEKIRAASQGRPKFILHDGPPYANGDIHLGHAVNKILKDMVVKSRNMAGFDAPYVPGWDCHGMPIEIQIEKRFGKSLPAAEVMAKARAYATEQIEKQKVGFKRLGVLGEWGNPYKTMNFQNEAEEIRALGKIIEKGYVYRGLKPVNWCFDCGSALAEAEVEYKDRTDPTIDVLFAFAEPEKTAHAFGLAELPRAEGGIVIWTTTPWTIPANQALNLHPEIVYALVDTERGLLVMAEERVEACMKDFGLTGRVIARTPGEKLANLRFHHPLAAAHPGYKRTSPVYLGDYVTTDTGTGVVHSSPAYGVEDFTSCKAHGMTDSDIINPVMGDGRYIESLPLFGGLTIWDANPKIVDALKAAGSLLRNERYAHSYMHCWRHKTPIIYRATSQWFAGMDTQPAGGGKTLRETALDAVDATAFYPSWGKQRLHAMIANRPDWTLSRQRQWGVPMAFFVHKETGELHPRTLELLEEVAKRVERQGIEAWQTLDARELIGDDANLYEKNRDTLDVWFDSGTTHWHVLRGSHKDQLQFPADLYLEGSDQHRGWFHSSLLTASMLDGRAPYKGLLTHGFTVDGEGRKMSKSLGNGIDPHEVANRLGAEIIRLWIASTDYSGELAISEEILKRVTEGYRRIRNTLRFLLANLSDFDYAKDALPAGQWLEIDRYAVAFAAQLQAELLAHYEKYEFHPVVAKLQTFCSEDLGGFYLDVLKDRLYTSAPASPARRSAQTALYHVTQGLLRVLAPFLSFTAEEAWRVFQPQSDTIFTETYYAYPEIAGAEALIAKWTLLRDVRGDVTKALEEARTANRIGSSLQAQVEVRASGARYDALASLGDDLKFVLITSAATVVKVDAQGDESVDVAASTYPKCERCWHYREDVGAHADHPTLCGRCFSNLFENGETRSAA.

The short motif at 66-76 (PYANGDIHLGH) is the 'HIGH' region element. Position 581 (Glu581) interacts with L-isoleucyl-5'-AMP. A 'KMSKS' region motif is present at residues 622 to 626 (KMSKS). Lys625 contributes to the ATP binding site. Residues Cys908, Cys911, Cys928, and Cys931 each contribute to the Zn(2+) site.

This sequence belongs to the class-I aminoacyl-tRNA synthetase family. IleS type 1 subfamily. Monomer. Zn(2+) is required as a cofactor.

It is found in the cytoplasm. It carries out the reaction tRNA(Ile) + L-isoleucine + ATP = L-isoleucyl-tRNA(Ile) + AMP + diphosphate. Catalyzes the attachment of isoleucine to tRNA(Ile). As IleRS can inadvertently accommodate and process structurally similar amino acids such as valine, to avoid such errors it has two additional distinct tRNA(Ile)-dependent editing activities. One activity is designated as 'pretransfer' editing and involves the hydrolysis of activated Val-AMP. The other activity is designated 'posttransfer' editing and involves deacylation of mischarged Val-tRNA(Ile). This is Isoleucine--tRNA ligase 1 from Burkholderia mallei (strain ATCC 23344).